Reading from the N-terminus, the 274-residue chain is Penicillin-insensitive murein endopeptidase (274 aa).

Residues 1-19 (MNKTAIALLALLASSASLA) form the signal peptide. 3 cysteine pairs are disulfide-bonded: cysteine 44-cysteine 265, cysteine 187-cysteine 235, and cysteine 216-cysteine 223. The Zn(2+) site is built by histidine 110, histidine 113, aspartate 120, aspartate 147, histidine 150, and histidine 211. The segment at 227-274 (PLPPPGDGCGAELQSWFEPPKPGTTKPEKKTPPPLPPSCQALLDEHVI) is disordered.

This sequence belongs to the peptidase M74 family. Dimer. Zn(2+) is required as a cofactor.

The protein localises to the periplasm. Its function is as follows. Murein endopeptidase that cleaves the D-alanyl-meso-2,6-diamino-pimelyl amide bond that connects peptidoglycan strands. Likely plays a role in the removal of murein from the sacculus. The polypeptide is Penicillin-insensitive murein endopeptidase (Escherichia coli O6:K15:H31 (strain 536 / UPEC)).